The chain runs to 797 residues: Striatin-3 (797 aa).

N-acetylmethionine is present on methionine 1. Gly residues-rich tracts occupy residues 1–12 (MDELAGGGGGGP) and 33–43 (GGNGAAGGGGP). The segment at 1 to 60 (MDELAGGGGGGPAMASPPRQQQGPGGNMSLSPGGNGAAGGGGPPATEGAGPAAGPELSRP) is disordered. Low complexity predominate over residues 44–55 (PATEGAGPAAGP). The tract at residues 71-79 (YIQHEWARF) is caveolin-binding. A coiled-coil region spans residues 77 to 136 (ARFEMERAHWEVERAELQARIAFLQGERKGQENLKKDLVRRIKMLEYALKQERAKYHKLK). Threonine 150 is subject to Phosphothreonine. Residues 166–183 (QNSQLTWKQGRQLLRQYL) are calmodulin-binding. A phosphoserine mark is found at serine 202, serine 214, serine 229, serine 257, and serine 335. A disordered region spans residues 313–336 (DGEGAGEARSSGDGTEWDKDDLSP). WD repeat units follow at residues 478 to 517 (SHFDGVRALAFHPVEPVLVTASEDHTLKLWNLQKTVPAKK), 531 to 570 (AHIGPVLSLAISSNGEQCFSGGTDATIQWWNMPSPNVDPY), 584 to 623 (AHTDAVWGLAYSGIKNQLLSCSADGTVRLWNPQEKLPCIC), 679 to 718 (QSSNHINRVVSHPTLPVTITAHEDRHIKFFDNKTGKMIHS), 721 to 760 (AHLDAVTSLAVDPNGIYLMSGSHDCSIRLWNLDSKTCVQE), and 767 to 796 (KLDESIYDVAFHPSKAYIASAGADALAKVF).

Belongs to the WD repeat striatin family. As to quaternary structure, tetramerizes. Part of the core of STRIPAK complexes composed of PP2A catalytic and scaffolding subunits, the striatins (PP2A regulatory subunits), the striatin-associated proteins MOB4, STRIP1 and STRIP2, PDCD10 and members of the STE20 kinases, such as STK24 and STK26. The STRIPAK complex can be extended by adapter proteins such as SLMAP:SIKE1 or CTTNBP2NL. Interacts with CDC42BPB.

It localises to the cytoplasm. The protein resides in the membrane. Its function is as follows. Calmodulin-binding scaffolding protein which is the center of the striatin-interacting phosphatase and kinase (STRIPAK) complexes. STRIPAK complexes have critical roles in protein (de)phosphorylation and are regulators of multiple signaling pathways including Hippo, MAPK, nuclear receptor and cytoskeleton remodeling. Different types of STRIPAK complexes are involved in a variety of biological processes such as cell growth, differentiation, apoptosis, metabolism and immune regulation. In Bos taurus (Bovine), this protein is Striatin-3 (STRN3).